Reading from the N-terminus, the 115-residue chain is uncharacterized protein (115 aa).

This is an uncharacterized protein from Human cytomegalovirus (strain AD169) (HHV-5).